A 554-amino-acid polypeptide reads, in one-letter code: Phospholipase B-like protein E (554 aa).

Residues 1-19 (MKLFILLIVIVFLISNSYS) form the signal peptide. N-linked (GlcNAc...) asparagine glycosylation is found at N113, N140, N231, N302, N340, and N546.

It belongs to the phospholipase B-like family.

The protein resides in the secreted. Functionally, probable phospholipase. This chain is Phospholipase B-like protein E (plbE), found in Dictyostelium discoideum (Social amoeba).